The following is a 376-amino-acid chain: WW domain-binding protein 4 (376 aa).

A Matrin-type zinc finger spans residues 11-42 (KFCDYCKCWIADNRPSVEFHERGKNHKENVAR). Polar residues predominate over residues 94-111 (PTVSPVISTVQPTPTSNQ). 2 disordered regions span residues 94–127 (PTVS…ASKG) and 192–324 (WEKP…ECLS). Residues 114 to 123 (EKKKKKKKKE) are compositionally biased toward basic residues. WW domains are found at residues 123-156 (EASK…KPEG) and 164-197 (TAAK…KPED). Residues 219–272 (EDAKSSDSHSDSEGEQKKAGEASTETKKLIIKFKEKNKSTEKRIGPEIQKEKST) show a composition bias toward basic and acidic residues. 2 positions are modified to phosphoserine: serine 228 and serine 230. Residues 357-375 (KKRRLENGKSRNLRQRGDD) form an interaction with SNRNP200 region.

Component of the spliceosome B complex. Associated with U2 snRNPs. Binds splicing factors SNRPB, SNRPC and SF1. Interacts via the WW domains with the Pro-rich domains of KHDRBS1/SAM68. Interacts via the WW domains with the Pro-rich domains of WBP11. Interacts with SNRNP200.

The protein resides in the nucleus. Its subcellular location is the nucleus speckle. In terms of biological role, involved in pre-mRNA splicing as a component of the spliceosome. May play a role in cross-intron bridging of U1 and U2 snRNPs in the mammalian A complex. This Mus musculus (Mouse) protein is WW domain-binding protein 4 (Wbp4).